Consider the following 954-residue polypeptide: MLHEALMLEIYRQALNAGALPTARPRSTESANSSERCPSHDSNSSEHGGGAGSGGVGHRLDAAALSTGVMPGEGPTTLHSSFPAVPQSLPSQPPSMEAYLHMVAAAAQQYGFPLAAAAAAGAGPRLPLPLANEAAAPFKLPPQASPTASSNNSEALDFRTNLYGRAESAEPPASEGEEEEFDDGANNPLDLSVGTRKRGHESEPQLGHIQVKKMFKSDSPPANSVASPSASQLLPGVNPYLAAVAAANIFRAGQFPDWNSKNDLVVDPLEKMSDIVKGGASGMGTKEKMHSSKATTPQAASQPPKSPVQPTPNQNSESGGGSGGGAAGSGAVTKARHNIWQSHWQNKGVASSVFRCVWCKQSFPTLEALTTHMKDSKHCGVNVPPFGNLPSNNPQPQHHHPTPPPPPQNHNLRKHSSGSASNHSPSANVKNAFQYRGDPPTPLPRKLVRGQNVWLGKGVEQAMQILKCMRCGESFRSLGEMTKHMQETQHYTNILSQEQSISIKSGNANANSDAKESHNSLSSEESRTLSAVLTCKVCDKAFNSLGDLSNHMAKNNHYAEPLLQSAGARKRPAPKKREKSLPVRKLLEMKGGSGTTQEDHSNEKTSVQGKPGLGPGGGDKNDAALFAERMRQYITGVKAPEEIAKVAAAQLLAKNKSPELVEQKNGGSAKAAGASSVLSAIEQMFTTSFDTPPRHASLPASSPSNSSTKNTSPVASSILKRLGIDETVDYNKPLIDTNDPYYQHYRYTSSERSGSECSAEARPRLDAPTPEKQQQGGGHDEESSKPAIKQEREAESKPVKMEIKSEFVDEPNEAEETSKMEAAVVNGSATNNNNNIVERSSPKTPSSAASPQTRLLPPRSPAESQRSVTPKSPASSHKSYDGSSEGTKKFPSDSLNALSSMFDSLGSSGAGANSRAKLAAAAAAGGSESPENLTAGGNSLAALRQFCVKKEKTA.

Disordered regions lie at residues 20-91, 167-207, and 276-331; these read LPTA…SLPS, ESAE…PQLG, and VKGG…GSGA. Residues 47 to 57 are compositionally biased toward gly residues; sequence HGGGAGSGGVG. Over residues 292-303 the composition is skewed to polar residues; that stretch reads SKATTPQAASQP. Residues 318–328 are compositionally biased toward gly residues; the sequence is SGGGSGGGAAG. The segment at 354-378 adopts a C2H2-type 1 zinc-finger fold; sequence FRCVWCKQSFPTLEALTTHMKDSKH. Positions 383–444 are disordered; sequence VPPFGNLPSN…YRGDPPTPLP (62 aa). Residues 417–428 show a composition bias toward low complexity; it reads SGSASNHSPSAN. 2 C2H2-type zinc fingers span residues 466 to 490 and 533 to 557; these read LKCMRCGESFRSLGEMTKHMQETQH and LTCKVCDKAFNSLGDLSNHMAKNNH. 3 disordered regions span residues 563–622, 689–714, and 748–935; these read LQSA…DKND, FDTPPRHASLPASSPSNSSTKNTSPV, and TSSE…NLTA. Residues 568–578 show a composition bias toward basic residues; that stretch reads ARKRPAPKKRE. Over residues 579–588 the composition is skewed to basic and acidic residues; it reads KSLPVRKLLE. A compositionally biased stretch (low complexity) spans 696–712; it reads ASLPASSPSNSSTKNTS. A phosphoserine mark is found at Ser-750 and Ser-758. Residues 778 to 807 show a composition bias toward basic and acidic residues; sequence GHDEESSKPAIKQEREAESKPVKMEIKSEF. Over residues 842–851 the composition is skewed to low complexity; it reads PKTPSSAASP. 2 stretches are compositionally biased toward polar residues: residues 862 to 885 and 893 to 907; these read AESQRSVTPKSPASSHKSYDGSSE and DSLNALSSMFDSLGS. The segment covering 910–926 has biased composition (low complexity); sequence AGANSRAKLAAAAAAGG.

It belongs to the teashirt C2H2-type zinc-finger protein family. In terms of assembly, binds arm. As to expression, shows a dynamic expression pattern during embryogenesis. Expressed in the embryonic trunk region (PS 3-13) with expression strongest in the thoracic segments. Expressed in a small group of cells corresponding to the anal tuft from stage 14. Strongly expressed in the embryonic ventral nerve cord. Also expressed in the proximal domain of the leg imaginal disk and in the region of the wing disk that will give rise to the proximal wing hinge. Expressed at high levels in the anterior and central embryonic midgut mesoderm and in the embryonic midgut endoderm. Expressed at a low level in more posterior visceral mesoderm of the gut. From stage 12 onwards, tsh and tio are colocalized in some cells of the CNS, trunk epidermis, hindgut and Malpighian tubules.

The protein localises to the nucleus. Its subcellular location is the cytoplasm. Homeotic protein that acts downstream of Arm in the Wg cascade during embryogenesis to determine segment identity throughout the entire trunk. Acts cooperatively with other trunk homeotic proteins to repress head homeotic genes and therefore repress head segmental identity. Necessary, in combination with Scr, for the formation of the prothoracic segment. Promotes eye development in the dorsal region of the eye disk and suppresses eye development in the ventral region in combination with Wg-signaling and several early dorso-ventral eye patterning genes. Required for proper development of proximal leg segments. Has differential functions along the dorso-ventral axs of the antennal and leg disks. May play a role in wing hinge development. Possible involvement in chromatin structure for modulation of transcription. Binds DNA and can act as both a transcriptional repressor and activator. Positively regulates its own expression as well as that of Dll. Negatively regulates the expression of mod. Required for Wg-mediated transcriptional repression of Ubx in the midgut. Also represses transcription of lab in the midgut and is necessary for the proper formation of anterior and central midgut structures. Tiptop (tio) and teashirt (tsh) have, on the whole, common activities. Tio and tsh repress each other's expression and tsh has a crucial role for trunk patterning that is in part masked by ectopic expression of tiptop. Both genes share a common activity required for the activation of Ser and svb and the maintenance of en and wg. The polypeptide is Protein teashirt (tsh) (Drosophila melanogaster (Fruit fly)).